Here is a 31-residue protein sequence, read N- to C-terminus: Maltose/maltodextrin import ATP-binding protein MalK (31 aa).

This sequence belongs to the ABC transporter superfamily. Maltooligosaccharide importer (TC 3.A.1.1.1) family. In terms of assembly, the complex is composed of two ATP-binding proteins (MalK), two transmembrane proteins (MalG and MalK) and a solute-binding protein (MalE).

The protein localises to the cell inner membrane. The enzyme catalyses D-maltose(out) + ATP + H2O = D-maltose(in) + ADP + phosphate + H(+). Part of the ABC transporter complex MalEFGK involved in maltose/maltodextrin import. Responsible for energy coupling to the transport system. This Photorhabdus luminescens (Xenorhabdus luminescens) protein is Maltose/maltodextrin import ATP-binding protein MalK.